A 224-amino-acid polypeptide reads, in one-letter code: Uridylate kinase (224 aa).

9 to 10 lines the ATP pocket; sequence GS. G43 contributes to the UMP binding site. ATP is bound by residues G44 and R48. Residues D65 and 113–119 contribute to the UMP site; that span reads TEPAHST. 3 residues coordinate ATP: T139, Y145, and D148.

The protein belongs to the UMP kinase family. Homohexamer.

It localises to the cytoplasm. The enzyme catalyses UMP + ATP = UDP + ADP. Its pathway is pyrimidine metabolism; CTP biosynthesis via de novo pathway; UDP from UMP (UMPK route): step 1/1. Inhibited by UTP. Catalyzes the reversible phosphorylation of UMP to UDP. This is Uridylate kinase from Methanothermobacter thermautotrophicus (strain ATCC 29096 / DSM 1053 / JCM 10044 / NBRC 100330 / Delta H) (Methanobacterium thermoautotrophicum).